Consider the following 142-residue polypeptide: ATP synthase epsilon chain (142 aa).

Belongs to the ATPase epsilon chain family. In terms of assembly, F-type ATPases have 2 components, CF(1) - the catalytic core - and CF(0) - the membrane proton channel. CF(1) has five subunits: alpha(3), beta(3), gamma(1), delta(1), epsilon(1). CF(0) has three main subunits: a, b and c.

Its subcellular location is the cell inner membrane. Functionally, produces ATP from ADP in the presence of a proton gradient across the membrane. In Histophilus somni (strain 129Pt) (Haemophilus somnus), this protein is ATP synthase epsilon chain.